We begin with the raw amino-acid sequence, 1429 residues long: Inactive rhomboid protein 1 (1429 aa).

3 disordered regions span residues 1–36, 560–579, and 740–766; these read MSSNGSDLGHNNRRNEKGNPDSVHSSMRGSMSSTRR, GNEDAGQSNGTNGNYAPDRP, and TSALNSGGNATSDINLTGDQSSHQPGA. Residues 1-843 are Cytoplasmic-facing; that stretch reads MSSNGSDLGH…RPFFTYWINT (843 aa). Residues 22-33 are compositionally biased toward low complexity; the sequence is SVHSSMRGSMSS. 2 stretches are compositionally biased toward polar residues: residues 564–573 and 740–763; these read AGQSNGTNGN and TSALNSGGNATSDINLTGDQSSHQ. Residues 844–864 form a helical membrane-spanning segment; that stretch reads VQVVVLILSIICYGIAPIGIG. The Lumenal portion of the chain corresponds to 865–1099; the sequence is SEQKTGQVLV…PDQLYRLLTS (235 aa). The helical transmembrane segment at 1100–1120 threads the bilayer; sequence LCMHAGILHLAITLIFQHLFL. Residues 1121 to 1131 lie on the Cytoplasmic side of the membrane; that stretch reads ADLERLIGTVR. Residues 1132–1152 traverse the membrane as a helical segment; sequence TAIVYIMSGFAGNLTSAILVP. Residues 1153–1156 are Lumenal-facing; sequence HRPE. Residues 1157–1177 traverse the membrane as a helical segment; the sequence is VGPSASLSGVVASLIALLVWM. Residues 1178 to 1186 lie on the Cytoplasmic side of the membrane; that stretch reads HWKYLHKPH. A helical transmembrane segment spans residues 1187-1207; sequence IALFKLLLLCSVLVGIGTLPY. At 1208-1210 the chain is on the lumenal side; that stretch reads QLN. A helical transmembrane segment spans residues 1211–1231; that stretch reads FLGLLAGVICGCLLTMSLVPF. Residues 1232–1245 are Cytoplasmic-facing; the sequence is TTFSKYGRKKKINL. A helical membrane pass occupies residues 1246 to 1266; sequence IWTCVLFHVVVYTAMIVTFYI. Topologically, residues 1267–1429 are lumenal; the sequence is HPSEFHSISF…INNNTEFNVL (163 aa).

Belongs to the peptidase S54 family. In terms of tissue distribution, specifically expressed in the nervous system and in brain.

It localises to the endoplasmic reticulum membrane. In terms of biological role, rhomboid protease-like protein which has no protease activity but regulates the secretion of several ligands of the epidermal growth factor receptor. Indirectly activates the epidermal growth factor receptor signaling pathway and may thereby regulate sleep, cell survival, proliferation and migration. The sequence is that of Inactive rhomboid protein 1 (rho-5) from Drosophila melanogaster (Fruit fly).